The primary structure comprises 582 residues: ATP-dependent lipid A-core flippase (582 aa).

The next 5 membrane-spanning stretches (helical) occupy residues 16–36 (LWPT…ALIL), 63–83 (VLVW…ITSY), 153–173 (IIGL…ILIV), 253–273 (PIIQ…ASFP), and 275–295 (VMDN…IALM). The 283-residue stretch at 28-310 (IVAGVALILN…LTNVNAQFQR (283 aa)) folds into the ABC transmembrane type-1 domain. One can recognise an ABC transporter domain in the interval 342 to 578 (VEFRNVTFTY…RGVYAQLHKM (237 aa)). 376-383 (GRSGSGKS) serves as a coordination point for ATP.

The protein belongs to the ABC transporter superfamily. Lipid exporter (TC 3.A.1.106) family. Homodimer.

The protein resides in the cell inner membrane. It catalyses the reaction ATP + H2O + lipid A-core oligosaccharideSide 1 = ADP + phosphate + lipid A-core oligosaccharideSide 2.. In terms of biological role, involved in lipopolysaccharide (LPS) biosynthesis. Translocates lipid A-core from the inner to the outer leaflet of the inner membrane. Transmembrane domains (TMD) form a pore in the inner membrane and the ATP-binding domain (NBD) is responsible for energy generation. In Shigella sonnei (strain Ss046), this protein is ATP-dependent lipid A-core flippase.